The chain runs to 592 residues: uncharacterized protein (592 aa).

An N-terminal signal peptide occupies residues 1 to 23 (MRKAPLLRFTLASLALACSQAFA). The Nucleophile role is filled by Ser-37. Residues Asp-294 and His-297 contribute to the active site. Positions 334 to 592 (HQDELRNQWQ…PDPGEPGGKP (259 aa)) constitute an Autotransporter domain. Residues 572-592 (FTLTGYTPHTAPDPGEPGGKP) form a disordered region.

It belongs to the 'GDSL' lipolytic enzyme family.

This is an uncharacterized protein from Pseudomonas putida (Arthrobacter siderocapsulatus).